Here is a 948-residue protein sequence, read N- to C-terminus: Puromycin-sensitive aminopeptidase (948 aa).

Residues Glu-206 and 341–345 (GAMEN) contribute to the substrate site. His-377 is a binding site for Zn(2+). Residue Glu-378 is the Proton acceptor of the active site. The Zn(2+) site is built by His-381 and Glu-400.

This sequence belongs to the peptidase M1 family. Zn(2+) is required as a cofactor. Expressed mainly in intestinal cells in the posterior part of the intestine and in amphid sensory neurons and nerve ring neurons. Expressed in neurons in the male tail. Expressed in mature spermatids (at protein level).

Its subcellular location is the cytoplasm. The protein localises to the cell cortex. It is found in the chromosome. It localises to the cytoskeleton. The protein resides in the spindle pole. It catalyses the reaction Release of an N-terminal amino acid, preferentially alanine, from a wide range of peptides, amides and arylamides.. Inhibited by chelating agent 1,10-phenanthroline, aminopeptidase inhibitors actinonin, amastatin, and leuhistin, and to a lesser extent by puromycin. Its function is as follows. Aminopeptidase. Required for the exit from meiosis, probably upstream of cyclin cyb-3. Involved in the establishment of the anterior-posterior polarity at the embryonic 1-cell stage by regulating the dynamics of sperm-donated centrosomes. Plays a role in oocyte maturation. Required for embryonic development. This chain is Puromycin-sensitive aminopeptidase, found in Caenorhabditis elegans.